The chain runs to 444 residues: Cell division cycle 20.4, cofactor of APC complex (444 aa).

Residues Leu88 to Gln99 show a composition bias toward polar residues. Residues Leu88–Arg108 are disordered. WD repeat units follow at residues Arg124–Leu161, Glu166–Thr205, Gly209–Glu246, Gly250–Thr289, Glu298–Ser340, Glu342–Glu383, and Gly386–Thr425.

This sequence belongs to the WD repeat CDC20/Fizzy family. In terms of assembly, the APC/C is composed of at least 11 subunits that stay tightly associated throughout the cell cycle.

The protein localises to the cytoplasm. It participates in protein modification; protein ubiquitination. Component of the anaphase promoting complex/cyclosome (APC/C), a cell cycle-regulated E3 ubiquitin-protein ligase complex that controls progression through mitosis and the G1 phase of the cell cycle. This Arabidopsis thaliana (Mouse-ear cress) protein is Cell division cycle 20.4, cofactor of APC complex (CDC20-4).